The primary structure comprises 242 residues: Triosephosphate isomerase (242 aa).

8–10 (NWK) lines the substrate pocket. Residue His98 is the Electrophile of the active site. The active-site Proton acceptor is Glu167. Residues Gly173, Ser205, and 226-227 (GG) contribute to the substrate site.

This sequence belongs to the triosephosphate isomerase family. As to quaternary structure, homodimer.

It is found in the cytoplasm. It carries out the reaction D-glyceraldehyde 3-phosphate = dihydroxyacetone phosphate. It participates in carbohydrate biosynthesis; gluconeogenesis. It functions in the pathway carbohydrate degradation; glycolysis; D-glyceraldehyde 3-phosphate from glycerone phosphate: step 1/1. Its function is as follows. Involved in the gluconeogenesis. Catalyzes stereospecifically the conversion of dihydroxyacetone phosphate (DHAP) to D-glyceraldehyde-3-phosphate (G3P). The chain is Triosephosphate isomerase from Mesomycoplasma hyopneumoniae (strain 232) (Mycoplasma hyopneumoniae).